Consider the following 469-residue polypeptide: 3-isopropylmalate dehydratase large subunit (469 aa).

Positions 350, 410, and 413 each coordinate [4Fe-4S] cluster.

It belongs to the aconitase/IPM isomerase family. LeuC type 1 subfamily. Heterodimer of LeuC and LeuD. Requires [4Fe-4S] cluster as cofactor.

The catalysed reaction is (2R,3S)-3-isopropylmalate = (2S)-2-isopropylmalate. It participates in amino-acid biosynthesis; L-leucine biosynthesis; L-leucine from 3-methyl-2-oxobutanoate: step 2/4. In terms of biological role, catalyzes the isomerization between 2-isopropylmalate and 3-isopropylmalate, via the formation of 2-isopropylmaleate. The polypeptide is 3-isopropylmalate dehydratase large subunit (Rhizobium johnstonii (strain DSM 114642 / LMG 32736 / 3841) (Rhizobium leguminosarum bv. viciae)).